A 236-amino-acid chain; its full sequence is UPF0502 protein Bamb_4889 (236 aa).

It belongs to the UPF0502 family.

In Burkholderia ambifaria (strain ATCC BAA-244 / DSM 16087 / CCUG 44356 / LMG 19182 / AMMD) (Burkholderia cepacia (strain AMMD)), this protein is UPF0502 protein Bamb_4889.